Consider the following 393-residue polypeptide: NAD(P)H-quinone oxidoreductase subunit H, chloroplastic (393 aa).

Belongs to the complex I 49 kDa subunit family. NDH is composed of at least 16 different subunits, 5 of which are encoded in the nucleus.

Its subcellular location is the plastid. The protein localises to the chloroplast thylakoid membrane. It carries out the reaction a plastoquinone + NADH + (n+1) H(+)(in) = a plastoquinol + NAD(+) + n H(+)(out). The catalysed reaction is a plastoquinone + NADPH + (n+1) H(+)(in) = a plastoquinol + NADP(+) + n H(+)(out). Its function is as follows. NDH shuttles electrons from NAD(P)H:plastoquinone, via FMN and iron-sulfur (Fe-S) centers, to quinones in the photosynthetic chain and possibly in a chloroplast respiratory chain. The immediate electron acceptor for the enzyme in this species is believed to be plastoquinone. Couples the redox reaction to proton translocation, and thus conserves the redox energy in a proton gradient. The protein is NAD(P)H-quinone oxidoreductase subunit H, chloroplastic of Gossypium hirsutum (Upland cotton).